A 281-amino-acid chain; its full sequence is Ribosomal RNA small subunit methyltransferase A (281 aa).

Residues asparagine 25, leucine 27, glycine 52, glutamate 73, aspartate 99, and asparagine 118 each coordinate S-adenosyl-L-methionine.

The protein belongs to the class I-like SAM-binding methyltransferase superfamily. rRNA adenine N(6)-methyltransferase family. RsmA subfamily.

The protein localises to the cytoplasm. It carries out the reaction adenosine(1518)/adenosine(1519) in 16S rRNA + 4 S-adenosyl-L-methionine = N(6)-dimethyladenosine(1518)/N(6)-dimethyladenosine(1519) in 16S rRNA + 4 S-adenosyl-L-homocysteine + 4 H(+). Functionally, specifically dimethylates two adjacent adenosines (A1518 and A1519) in the loop of a conserved hairpin near the 3'-end of 16S rRNA in the 30S particle. May play a critical role in biogenesis of 30S subunits. This chain is Ribosomal RNA small subunit methyltransferase A, found in Erythrobacter litoralis (strain HTCC2594).